The sequence spans 698 residues: Elongation factor G (698 aa).

Residues aspartate 10–leucine 285 form the tr-type G domain. Residues alanine 19 to threonine 26, aspartate 83 to histidine 87, and asparagine 137 to aspartate 140 contribute to the GTP site.

This sequence belongs to the TRAFAC class translation factor GTPase superfamily. Classic translation factor GTPase family. EF-G/EF-2 subfamily.

Its subcellular location is the cytoplasm. Catalyzes the GTP-dependent ribosomal translocation step during translation elongation. During this step, the ribosome changes from the pre-translocational (PRE) to the post-translocational (POST) state as the newly formed A-site-bound peptidyl-tRNA and P-site-bound deacylated tRNA move to the P and E sites, respectively. Catalyzes the coordinated movement of the two tRNA molecules, the mRNA and conformational changes in the ribosome. This is Elongation factor G from Lactiplantibacillus plantarum (strain ATCC BAA-793 / NCIMB 8826 / WCFS1) (Lactobacillus plantarum).